A 196-amino-acid chain; its full sequence is Nucleoside triphosphate pyrophosphatase (196 aa).

Residue Asp-72 is the Proton acceptor of the active site.

The protein belongs to the Maf family. Requires a divalent metal cation as cofactor.

It is found in the cytoplasm. It catalyses the reaction a ribonucleoside 5'-triphosphate + H2O = a ribonucleoside 5'-phosphate + diphosphate + H(+). It carries out the reaction a 2'-deoxyribonucleoside 5'-triphosphate + H2O = a 2'-deoxyribonucleoside 5'-phosphate + diphosphate + H(+). Functionally, nucleoside triphosphate pyrophosphatase. May have a dual role in cell division arrest and in preventing the incorporation of modified nucleotides into cellular nucleic acids. The protein is Nucleoside triphosphate pyrophosphatase of Chlamydia muridarum (strain MoPn / Nigg).